A 158-amino-acid polypeptide reads, in one-letter code: CD-NTase/cGAS isopeptidase (158 aa).

Glutamate 38 serves as the catalytic Proton donor/acceptor. Zn(2+) contacts are provided by histidine 100, histidine 102, and aspartate 113.

It belongs to the peptidase M67B family. Cap3 isopeptidase subfamily.

In terms of biological role, metalloprotease priming reversal component of a CBASS antivirus system. CBASS (cyclic oligonucleotide-based antiphage signaling system) provides immunity against bacteriophages. The CD-NTase protein synthesizes cyclic nucleotides in response to infection; these serve as specific second messenger signals. The signals activate a diverse range of effectors, leading to bacterial cell death and thus abortive phage infection. A type II-A(GA) CBASS system. Its function is as follows. Reverses the primed state of CdnA, the CD-NTase. Functionally, the capV-cdnA-cap2-cap3 operon provides about 10(4)-fold protection in strain BWHPSA011 against infection by phage PaMx41. In P.aeruginosa strain PAO1 it confers protection against phages PaMx41 and JBD18 but not JBD67 (JBD18 and JBD67 do not replicate in BWHPSA011 / Pa011). When acb2 in JBD67 is deleted this CBASS operon then protects against JDB67 also. This CBASS system limits prophage induction of lysogenized JBD67 as well as viral lytic replication. The sequence is that of CD-NTase/cGAS isopeptidase from Pseudomonas aeruginosa (strain BWHPSA011 / Pa011).